The following is a 249-amino-acid chain: Indole-3-glycerol phosphate synthase (249 aa).

This sequence belongs to the TrpC family.

It catalyses the reaction 1-(2-carboxyphenylamino)-1-deoxy-D-ribulose 5-phosphate + H(+) = (1S,2R)-1-C-(indol-3-yl)glycerol 3-phosphate + CO2 + H2O. It functions in the pathway amino-acid biosynthesis; L-tryptophan biosynthesis; L-tryptophan from chorismate: step 4/5. In Pyrobaculum aerophilum (strain ATCC 51768 / DSM 7523 / JCM 9630 / CIP 104966 / NBRC 100827 / IM2), this protein is Indole-3-glycerol phosphate synthase.